The following is a 361-amino-acid chain: Putative agmatine deiminase (361 aa).

The active-site Amidino-cysteine intermediate is the C354.

This sequence belongs to the agmatine deiminase family.

It catalyses the reaction agmatine + H2O = N-carbamoylputrescine + NH4(+). The polypeptide is Putative agmatine deiminase (Streptococcus pneumoniae (strain Hungary19A-6)).